A 331-amino-acid polypeptide reads, in one-letter code: 3-dehydroquinate synthase homolog (331 aa).

Belongs to the archaeal-type DHQ synthase family.

The protein is 3-dehydroquinate synthase homolog of Aquifex aeolicus (strain VF5).